Reading from the N-terminus, the 338-residue chain is Fe-S cluster assembly protein DRE2 (338 aa).

The N-terminal SAM-like domain stretch occupies residues 1–165; sequence MAKSGLLLIH…LPSFKKAANK (165 aa). The interval 166 to 232 is linker; that stretch reads PLPTFKKKVE…DDLLNEEDAK (67 aa). The tract at residues 181–223 is disordered; the sequence is VEARVHKAENDDDELEDEEDENLFDASRSKYFDEDDSESLDED. 2 stretches are compositionally biased toward acidic residues: residues 190–203 and 213–223; these read NDDD…DENL and DEDDSESLDED. [2Fe-2S] cluster-binding residues include Cys242, Cys253, Cys256, and Cys258. Residues 242-258 are fe-S binding site A; sequence CGKSKTKKKKACKDCSC. 4 residues coordinate [4Fe-4S] cluster: Cys301, Cys304, Cys312, and Cys315. 2 consecutive short sequence motifs (cx2C motif) follow at residues 301 to 304 and 312 to 315; these read CGSC and CTGC. Positions 301–315 are fe-S binding site B; it reads CGSCSLGDAFRCTGC.

Belongs to the anamorsin family. In terms of assembly, monomer. Interacts with TAH18. Interacts with MIA40. The cofactor is [2Fe-2S] cluster. [4Fe-4S] cluster is required as a cofactor.

The protein resides in the cytoplasm. It localises to the mitochondrion intermembrane space. Component of the cytosolic iron-sulfur (Fe-S) protein assembly (CIA) machinery required for the maturation of extramitochondrial Fe-S proteins. Part of an electron transfer chain functioning in an early step of cytosolic Fe-S biogenesis, facilitating the de novo assembly of a [4Fe-4S] cluster on the scaffold complex CFD1-NBP35. Electrons are transferred to DRE2 from NADPH via the FAD- and FMN-containing protein TAH18. TAH18-DRE2 are also required for the assembly of the diferric tyrosyl radical cofactor of ribonucleotide reductase (RNR), probably by providing electrons for reduction during radical cofactor maturation in the catalytic small subunit RNR2. The chain is Fe-S cluster assembly protein DRE2 from Candida glabrata (strain ATCC 2001 / BCRC 20586 / JCM 3761 / NBRC 0622 / NRRL Y-65 / CBS 138) (Yeast).